The sequence spans 267 residues: Eukaryotic translation initiation factor 3 subunit J (267 aa).

2 disordered regions span residues 1–128 (MAPS…DIDL) and 220–241 (KMREERAADKGNKKTKAAKTKV). Acidic residues predominate over residues 28-46 (DEEEEDVLDSWDAAEDSEV). Positions 44 to 96 (SEVEREKAAKAAAAAAKAEAEAAAKKKSKAQRIEEHKQERKKQAEANESDEDS) form a coiled coil. Basic and acidic residues predominate over residues 74–88 (QRIEEHKQERKKQAE). The span at 90 to 100 (NESDEDSDEDE) shows a compositional bias: acidic residues. 2 stretches are compositionally biased toward basic and acidic residues: residues 108–121 (RRTEKEGDLKHAQD) and 220–231 (KMREERAADKGN).

This sequence belongs to the eIF-3 subunit J family. In terms of assembly, component of the eukaryotic translation initiation factor 3 (eIF-3) complex.

The protein localises to the cytoplasm. Functionally, component of the eukaryotic translation initiation factor 3 (eIF-3) complex, which is involved in protein synthesis of a specialized repertoire of mRNAs and, together with other initiation factors, stimulates binding of mRNA and methionyl-tRNAi to the 40S ribosome. The eIF-3 complex specifically targets and initiates translation of a subset of mRNAs involved in cell proliferation. The sequence is that of Eukaryotic translation initiation factor 3 subunit J (hcr1) from Neosartorya fischeri (strain ATCC 1020 / DSM 3700 / CBS 544.65 / FGSC A1164 / JCM 1740 / NRRL 181 / WB 181) (Aspergillus fischerianus).